The sequence spans 727 residues: Synaptic vesicle glycoprotein 2C (727 aa).

The interaction with SYT1 stretch occupies residues 1–57 (MEDSYKDRTSLMKGAKDIAREVKKQTVKKVNQAVDRAQDEYTQRSYSRFQDEEDDDD). Topologically, residues 1-154 (MEDSYKDRTS…CGHGRFQWAL (154 aa)) are cytoplasmic. Disordered stretches follow at residues 24 to 84 (KQTV…GHDE) and 109 to 128 (VGQP…SERR). Residues Ser-75 and Ser-76 each carry the phosphoserine modification. Thr-79 is subject to Phosphothreonine. The span at 113–128 (KGDEYKDRRELESERR) shows a compositional bias: basic and acidic residues. Residues 155 to 175 (FFVLGMALMADGVEVFVVGFV) traverse the membrane as a helical segment. The Extracellular portion of the chain corresponds to 176–191 (LPSAETDLCIPNSGSG). Residues 192 to 212 (WLGSIVYLGMMVGAFFWGGLA) traverse the membrane as a helical segment. At 213 to 226 (DKVGRKQSLLICMS) the chain is on the cytoplasmic side. The chain crosses the membrane as a helical span at residues 227–247 (VNGFFAFLSSFVQGYGFFLFC). A topological domain (extracellular) is located at residue Arg-248. A helical membrane pass occupies residues 249–269 (LLSGFGIGGAIPTVFSYFAEV). Topologically, residues 270-280 (LAREKRGEHLS) are cytoplasmic. The helical transmembrane segment at 281–301 (WLCMFWMIGGIYASAMAWAII) threads the bilayer. Residues 302-320 (PHYGWSFSMGSAYQFHSWR) lie on the Extracellular side of the membrane. A helical membrane pass occupies residues 321 to 341 (VFVIVCALPCVSSVVALTFMP). Over 342–437 (ESPRFLLEVG…PVRDNTIKLT (96 aa)) the chain is Cytoplasmic. A helical transmembrane segment spans residues 438 to 458 (IVWFTLSFGYYGLSVWFPDVI). The Extracellular segment spans residues 459–578 (KPLQSDEYAL…CQITFDDDYS (120 aa)). Tyr-466 is modified (phosphotyrosine). Asn-480, Asn-484, Asn-534, Asn-559, and Asn-565 each carry an N-linked (GlcNAc...) asparagine glycan. The tract at residues 519 to 563 (SCTFEDVTSVNTYFKNCTFIDTVFDNTDFEPYKFIDSEFKNCSFF) is (Microbial infection) C.botulinum neurotoxin type A-binding. Residues 579–599 (AYWIYFVNFLGTLAVLPGNIV) traverse the membrane as a helical segment. Over 600–609 (SALLMDRIGR) the chain is Cytoplasmic. Residues 610–630 (LTMLGGSMVLSGISCFFLWFG) form a helical membrane-spanning segment. Topologically, residues 631 to 636 (TSESMM) are extracellular. The helical transmembrane segment at 637-657 (IGMLCLYNGLTISAWNSLDVV) threads the bilayer. The Cytoplasmic portion of the chain corresponds to 658–669 (TVELYPTDRRAT). A helical membrane pass occupies residues 670-690 (GFGFLNALCKAAAVLGNLIFG). Over 691-698 (SLVSITKS) the chain is Extracellular. Residues 699 to 719 (IPILLASTVLVCGGLVGLCLP) form a helical membrane-spanning segment. Over 720–727 (DTRTQVLM) the chain is Cytoplasmic.

Belongs to the major facilitator superfamily. Interacts with SYT1 in a calcium-dependent manner. In terms of assembly, (Microbial infection) Interacts with C.botulinum neurotoxin type A1 and type A2 (BoNT/A, botA). Interaction is improved by glycosylation of SV2. In terms of processing, N-glycosylated. Upon expression in a kidney cell line the most abundant glycan on Asn-534 is GlcNAc(3)Hex(5), while on Asn-559 and Asn-565 the most abundant glycan is GlcNAc2Fuc1Man3GlcNAc3Gal3. Both Asn-559 and Asn-565 have a high degree of glycan heterogeneity.

It localises to the cytoplasmic vesicle. The protein localises to the secretory vesicle. The protein resides in the synaptic vesicle membrane. Its function is as follows. Plays a role in the control of regulated secretion in neural and endocrine cells, enhancing selectively low-frequency neurotransmission. Positively regulates vesicle fusion by maintaining the readily releasable pool of secretory vesicles. (Microbial infection) Receptor for C.botulinum neurotoxin type A (BoNT/A, botA); the toxin probably binds via extracellular loop 4. Recognition by BoNT/A relies on both protein-protein and protein-N-glycosylation; glycosylation of Asn-559 increases its affinity for BoNT/A. Also serves as a receptor for the closely related C.botulinum neurotoxin type A2; glycosylation is not essential but enhances the interaction. In terms of biological role, (Microbial infection) Possible receptor for C.botulinum neurotoxin type D (BoNT/D, botD); note that type D does not usually infect humans. This Homo sapiens (Human) protein is Synaptic vesicle glycoprotein 2C (SV2C).